A 399-amino-acid polypeptide reads, in one-letter code: 1-deoxy-D-xylulose 5-phosphate reductoisomerase (399 aa).

Residues Thr13, Gly14, Ser15, Ile16, and Asn127 each contribute to the NADPH site. Lys128 contributes to the 1-deoxy-D-xylulose 5-phosphate binding site. An NADPH-binding site is contributed by Glu129. Asp153 lines the Mn(2+) pocket. 1-deoxy-D-xylulose 5-phosphate contacts are provided by Ser154, Glu155, Ser187, and His210. Residue Glu155 participates in Mn(2+) binding. Gly216 serves as a coordination point for NADPH. Ser223, Asn228, Lys229, and Glu232 together coordinate 1-deoxy-D-xylulose 5-phosphate. Residue Glu232 participates in Mn(2+) binding.

The protein belongs to the DXR family. Mg(2+) serves as cofactor. The cofactor is Mn(2+).

It catalyses the reaction 2-C-methyl-D-erythritol 4-phosphate + NADP(+) = 1-deoxy-D-xylulose 5-phosphate + NADPH + H(+). It participates in isoprenoid biosynthesis; isopentenyl diphosphate biosynthesis via DXP pathway; isopentenyl diphosphate from 1-deoxy-D-xylulose 5-phosphate: step 1/6. Functionally, catalyzes the NADPH-dependent rearrangement and reduction of 1-deoxy-D-xylulose-5-phosphate (DXP) to 2-C-methyl-D-erythritol 4-phosphate (MEP). In Bordetella petrii (strain ATCC BAA-461 / DSM 12804 / CCUG 43448), this protein is 1-deoxy-D-xylulose 5-phosphate reductoisomerase.